The sequence spans 348 residues: Thioesterase-like protein TwmA (348 aa).

It functions in the pathway secondary metabolite biosynthesis. Thioesterase-like protein; part of the gene cluster that mediates the biosynthesis of wortmanamides A and B, reduced long-chain polyketides amidated with a specific omega-amino acid, 5-aminopentanoic acid (5PA). The PKS modules of TwmB are involved in the synthesis of the polyketide backbone, whereas the non-canonical C domain of TwmB is a bonafide condensation domain that specifically selects 5PA and catalyzes amidation to release polyketide chain. The C domain clearly prefers C16 and C18 fatty acyl substrates, which is consistent with simultaneous formation of both octaketide and nonaketide acyl amides wortmanamides A and B. Because TwmB lacks a designated enoylreductase (ER) domain, the required activity is provided the enoyl reductase TwmE. The roles of the remaining enzymes have still to be clarified. The chain is Thioesterase-like protein TwmA from Talaromyces wortmannii (Penicillium wortmannii).